We begin with the raw amino-acid sequence, 918 residues long: Hexokinase-1 (918 aa).

An N-acetylmethionine modification is found at Met1. The interval 1–10 is mitochondrial-binding peptide (MBP); it reads MIAAQLLAYY. Hexokinase domains lie at 16–458 and 464–906; these read DDQV…MVTA and AEQH…LITA. ATP-binding positions include Arg30 and 84–89; that span reads DLGGSS. The segment at 73–207 is hexokinase small subdomain 1; the sequence is DGSEKGDFIA…DYDANIVAVV (135 aa). 84–91 lines the D-glucose 6-phosphate pocket; sequence DLGGSSFR. D-glucose contacts are provided by residues Ser155, 172-173, and 208-209; these read TK and ND. The hexokinase large subdomain 1 stretch occupies residues 208–447; that stretch reads NDTVGTMIDC…SDVRFLLSES (240 aa). Residues Asp209 and Thr232 each coordinate D-glucose 6-phosphate. D-glucose-binding positions include Asn235, Glu260, and 291–294; that span reads QRFE. Ser337 carries the phosphoserine modification. 413 to 415 provides a ligand contact to D-glucose 6-phosphate; the sequence is DGS. ATP is bound by residues 425 to 426 and 532 to 537; these read RR and DLGGTN. Positions 521-655 are hexokinase small subdomain 2; it reads DGTEDGDFLA…EFDLDVVAVV (135 aa). Residue 532–536 coordinates D-glucose 6-phosphate; sequence DLGGT. D-glucose contacts are provided by residues 603 to 604, 620 to 621, and 656 to 657; these read SF, TK, and ND. Positions 656–895 are hexokinase large subdomain 2; it reads NDTVGTMMTC…CNVSFLLSED (240 aa). Positions 657 and 680 each coordinate D-glucose 6-phosphate. Position 680 (Thr680) interacts with ATP. Residues 682–683, Glu708, and Glu742 each bind D-glucose; that span reads SN. ATP contacts are provided by residues 747–748, 784–788, and 863–867; these read GI, TKFLS, and TLYKL. Residues 861–863 and Ser897 each bind D-glucose 6-phosphate; that span reads DGT.

This sequence belongs to the hexokinase family. Monomer. Interacts with RABL2/RABL2A; binds preferentially to GTP-bound RABL2. Interacts with VDAC1. The HK1-VDAC1 complex interacts with ATF2. Interacts (via N-terminal spermatogenic cell-specific region) with PFKM (via C-terminus). Interacts with SMAD5.

The protein resides in the mitochondrion outer membrane. The protein localises to the cytoplasm. It localises to the cytosol. The enzyme catalyses a D-hexose + ATP = a D-hexose 6-phosphate + ADP + H(+). The catalysed reaction is D-fructose + ATP = D-fructose 6-phosphate + ADP + H(+). It catalyses the reaction D-glucose + ATP = D-glucose 6-phosphate + ADP + H(+). It carries out the reaction D-mannose + ATP = D-mannose 6-phosphate + ADP + H(+). The enzyme catalyses D-glucosamine + ATP = D-glucosamine 6-phosphate + ADP + H(+). Its pathway is carbohydrate metabolism; hexose metabolism. It functions in the pathway carbohydrate degradation; glycolysis; D-glyceraldehyde 3-phosphate and glycerone phosphate from D-glucose: step 1/4. Hexokinase is an allosteric enzyme inhibited by its product D-glucose 6-phosphate. Hexokinase activity is inhibited by N-acetyl-D-glucosamine. Catalyzes the phosphorylation of various hexoses, such as D-glucose, D-glucosamine, D-fructose, D-mannose and 2-deoxy-D-glucose, to hexose 6-phosphate (D-glucose 6-phosphate, D-glucosamine 6-phosphate, D-fructose 6-phosphate, D-mannose 6-phosphate and 2-deoxy-D-glucose 6-phosphate, respectively). Does not phosphorylate N-acetyl-D-glucosamine. Mediates the initial step of glycolysis by catalyzing phosphorylation of D-glucose to D-glucose 6-phosphate. Involved in innate immunity and inflammation by acting as a pattern recognition receptor for bacterial peptidoglycan. When released in the cytosol, N-acetyl-D-glucosamine component of bacterial peptidoglycan inhibits the hexokinase activity of HK1 and causes its dissociation from mitochondrial outer membrane, thereby activating the NLRP3 inflammasome. In Bos taurus (Bovine), this protein is Hexokinase-1.